Reading from the N-terminus, the 60-residue chain is Large ribosomal subunit protein uL30 (60 aa).

The protein belongs to the universal ribosomal protein uL30 family. Part of the 50S ribosomal subunit.

The sequence is that of Large ribosomal subunit protein uL30 from Pediococcus pentosaceus (strain ATCC 25745 / CCUG 21536 / LMG 10740 / 183-1w).